Here is a 296-residue protein sequence, read N- to C-terminus: Large ribosomal subunit protein uL15m (296 aa).

The N-terminal 21 residues, 1-21 (MAGPLQGGGARALDLLRGLPR), are a transit peptide targeting the mitochondrion. Residues 22-66 (VSLANLKPNPGSKKPERRPRGRRRGRKCGRGHKGERQRGTRPRLG) are disordered. Positions 36–52 (PERRPRGRRRGRKCGRG) are enriched in basic residues.

It belongs to the universal ribosomal protein uL15 family. Component of the mitochondrial large ribosomal subunit (mt-LSU). Mature mammalian 55S mitochondrial ribosomes consist of a small (28S) and a large (39S) subunit. The 28S small subunit contains a 12S ribosomal RNA (12S mt-rRNA) and 30 different proteins. The 39S large subunit contains a 16S rRNA (16S mt-rRNA), a copy of mitochondrial valine transfer RNA (mt-tRNA(Val)), which plays an integral structural role, and 52 different proteins.

The protein localises to the mitochondrion. This is Large ribosomal subunit protein uL15m (MRPL15) from Homo sapiens (Human).